A 37-amino-acid chain; its full sequence is Large ribosomal subunit protein bL36 (37 aa).

The protein belongs to the bacterial ribosomal protein bL36 family.

The protein is Large ribosomal subunit protein bL36 of Deinococcus deserti (strain DSM 17065 / CIP 109153 / LMG 22923 / VCD115).